The primary structure comprises 111 residues: Probable U2 small nuclear ribonucleoprotein B'' (111 aa).

The RRM domain occupies 4 to 83 (NTLYVNNLND…KEMKIQYAHS (80 aa)).

In terms of assembly, belongs to the 40S cdc5-associated complex (or cwf complex), a spliceosome sub-complex reminiscent of a late-stage spliceosome composed of the U2, U5 and U6 snRNAs and at least brr2, cdc5, cwf2/prp3, cwf3/syf1, cwf4/syf3, cwf5/ecm2, spp42/cwf6, cwf7/spf27, cwf8, cwf9, cwf10, cwf11, cwf12, prp45/cwf13, cwf14, cwf15, cwf16, cwf17, cwf18, cwf19, cwf20, cwf21, cwf22, cwf23, cwf24, cwf25, cwf26, cyp7/cwf27, cwf28, cwf29/ist3, lea1, msl1, prp5/cwf1, prp10, prp12/sap130, prp17, prp22, sap61, sap62, sap114, sap145, slu7, smb1, smd1, smd3, smf1, smg1 and syf2.

It localises to the nucleus. In terms of biological role, involved in pre-mRNA splicing. This protein is associated with snRNP U2. It binds stem loop IV of U2 snRNA. In Schizosaccharomyces pombe (strain 972 / ATCC 24843) (Fission yeast), this protein is Probable U2 small nuclear ribonucleoprotein B'' (msl1).